We begin with the raw amino-acid sequence, 306 residues long: tRNA pseudouridine synthase B (306 aa).

Residue D43 is the Nucleophile of the active site.

It belongs to the pseudouridine synthase TruB family. Type 1 subfamily.

The enzyme catalyses uridine(55) in tRNA = pseudouridine(55) in tRNA. Responsible for synthesis of pseudouridine from uracil-55 in the psi GC loop of transfer RNAs. The protein is tRNA pseudouridine synthase B of Syntrophobacter fumaroxidans (strain DSM 10017 / MPOB).